A 196-amino-acid polypeptide reads, in one-letter code: MQLKRVAEAKLPTPWGDFLMVGFEELATGHDHLALIFGDISGDKPVLSRVHSECLTGDALFSLRCDCGFQLEVALTRIAEEGRGVLIYHRQEGRNIGLLNKIRAYALQDLGADTVEANHQLGFAADERDFTLCSDMYKLLGIKAVRLLTNNPKKVEILTQAGINIVERVPLIVGENPKNEHYLATKAAKMGHLLTK.

49–53 lines the GTP pocket; the sequence is RVHSE. Zn(2+)-binding residues include Cys-54, Cys-65, and Cys-67. GTP is bound by residues Gln-70, 92-94, and Thr-114; that span reads EGR. Asp-126 acts as the Proton acceptor in catalysis. The active-site Nucleophile is the Arg-128. Residues Thr-149 and Lys-154 each coordinate GTP.

Belongs to the GTP cyclohydrolase II family. As to quaternary structure, homodimer. The cofactor is Zn(2+).

It catalyses the reaction GTP + 4 H2O = 2,5-diamino-6-hydroxy-4-(5-phosphoribosylamino)-pyrimidine + formate + 2 phosphate + 3 H(+). The protein operates within cofactor biosynthesis; riboflavin biosynthesis; 5-amino-6-(D-ribitylamino)uracil from GTP: step 1/4. Its function is as follows. Catalyzes the conversion of GTP to 2,5-diamino-6-ribosylamino-4(3H)-pyrimidinone 5'-phosphate (DARP), formate and pyrophosphate. In Yersinia pestis, this protein is GTP cyclohydrolase-2.